The following is a 312-amino-acid chain: Acetaldehyde dehydrogenase (312 aa).

12 to 15 is a binding site for NAD(+); sequence SGNV. Cys-132 (acyl-thioester intermediate) is an active-site residue. NAD(+) contacts are provided by residues 163 to 171 and Asn-290; that span reads SAGPGTRAN.

It belongs to the acetaldehyde dehydrogenase family.

The enzyme catalyses acetaldehyde + NAD(+) + CoA = acetyl-CoA + NADH + H(+). The protein is Acetaldehyde dehydrogenase (cbzQ) of Pseudomonas putida (Arthrobacter siderocapsulatus).